Consider the following 670-residue polypeptide: Acetyl-coenzyme A synthetase (670 aa).

CoA is bound by residues 205–208 (RRGR) and Thr326. Residues 402–404 (GEP), 426–431 (STWWMT), Asp517, Arg532, and Arg543 contribute to the ATP site. Mg(2+) contacts are provided by His556 and Val559. Arg601 serves as a coordination point for CoA. Lys626 carries the post-translational modification N6-acetyllysine.

Belongs to the ATP-dependent AMP-binding enzyme family. Mg(2+) serves as cofactor. Acetylated. Deacetylation by the SIR2-homolog deacetylase activates the enzyme.

It catalyses the reaction acetate + ATP + CoA = acetyl-CoA + AMP + diphosphate. Its function is as follows. Catalyzes the conversion of acetate into acetyl-CoA (AcCoA), an essential intermediate at the junction of anabolic and catabolic pathways. AcsA undergoes a two-step reaction. In the first half reaction, AcsA combines acetate with ATP to form acetyl-adenylate (AcAMP) intermediate. In the second half reaction, it can then transfer the acetyl group from AcAMP to the sulfhydryl group of CoA, forming the product AcCoA. The chain is Acetyl-coenzyme A synthetase from Pyrobaculum aerophilum (strain ATCC 51768 / DSM 7523 / JCM 9630 / CIP 104966 / NBRC 100827 / IM2).